A 292-amino-acid polypeptide reads, in one-letter code: Early E4 34 kDa protein (292 aa).

This sequence belongs to the adenoviridae E4 30 to 34 kDa protein family. In terms of assembly, interacts with E1B-55k.

It is found in the host nucleus. The protein resides in the host cytoplasm. Plays a major role to prevent cellular inhibition of viral genome replication by nuclear bodies. Assembles an SCF-like E3 ubiquitin ligase complex based on the cellular proteins ELOB, ELOC, CUL5 and RBX1, in cooperation with viral E1B-55K. This viral RING-type ligase ubiquitinates cellular substrates prior to proteasomal degradation: p53/TP53, LIG4, MRE11-RAD50-NBS1 (MRN) complex, ITGA3, DAXX and BLM. The protein is Early E4 34 kDa protein of Human adenovirus D serotype 9 (HAdV-9).